The sequence spans 207 residues: Glycerol-3-phosphate acyltransferase (207 aa).

5 helical membrane-spanning segments follow: residues 3–23 (LIGL…VWVG), 54–74 (TIVM…PIVF), 81–101 (GTAT…VSIF), 122–142 (PIMF…TSIV), and 158–178 (LVFQ…FVFY).

It belongs to the PlsY family. In terms of assembly, probably interacts with PlsX.

It localises to the cell membrane. The enzyme catalyses an acyl phosphate + sn-glycerol 3-phosphate = a 1-acyl-sn-glycero-3-phosphate + phosphate. Its pathway is lipid metabolism; phospholipid metabolism. In terms of biological role, catalyzes the transfer of an acyl group from acyl-phosphate (acyl-PO(4)) to glycerol-3-phosphate (G3P) to form lysophosphatidic acid (LPA). This enzyme utilizes acyl-phosphate as fatty acyl donor, but not acyl-CoA or acyl-ACP. The protein is Glycerol-3-phosphate acyltransferase of Levilactobacillus brevis (strain ATCC 367 / BCRC 12310 / CIP 105137 / JCM 1170 / LMG 11437 / NCIMB 947 / NCTC 947) (Lactobacillus brevis).